The primary structure comprises 947 residues: Bifunctional glutamine synthetase adenylyltransferase/adenylyl-removing enzyme (947 aa).

The tract at residues 1 to 443 (MQLPSSLVSV…VFETLIGDDE (443 aa)) is adenylyl removase. The tract at residues 451–947 (ARHFHELWDM…VKQAWNQWFA (497 aa)) is adenylyl transferase.

Belongs to the GlnE family. Requires Mg(2+) as cofactor.

The enzyme catalyses [glutamine synthetase]-O(4)-(5'-adenylyl)-L-tyrosine + phosphate = [glutamine synthetase]-L-tyrosine + ADP. It catalyses the reaction [glutamine synthetase]-L-tyrosine + ATP = [glutamine synthetase]-O(4)-(5'-adenylyl)-L-tyrosine + diphosphate. Its function is as follows. Involved in the regulation of glutamine synthetase GlnA, a key enzyme in the process to assimilate ammonia. When cellular nitrogen levels are high, the C-terminal adenylyl transferase (AT) inactivates GlnA by covalent transfer of an adenylyl group from ATP to specific tyrosine residue of GlnA, thus reducing its activity. Conversely, when nitrogen levels are low, the N-terminal adenylyl removase (AR) activates GlnA by removing the adenylyl group by phosphorolysis, increasing its activity. The regulatory region of GlnE binds the signal transduction protein PII (GlnB) which indicates the nitrogen status of the cell. This Vibrio parahaemolyticus serotype O3:K6 (strain RIMD 2210633) protein is Bifunctional glutamine synthetase adenylyltransferase/adenylyl-removing enzyme.